A 136-amino-acid chain; its full sequence is uncharacterized protein (136 aa).

The disordered stretch occupies residues 1 to 100 (MQSREPSGWR…PCSGGPDRPE (100 aa)). Basic residues predominate over residues 66 to 75 (RLLRWHHRVP).

This is an uncharacterized protein from Homo sapiens (Human).